A 37-amino-acid chain; its full sequence is Alpha-conotoxin TxID (37 aa).

Residues 1-21 constitute a propeptide that is removed on maturation; that stretch reads FDGRNAAGNDKMSALMALTTR. Intrachain disulfides connect Cys-23–Cys-29 and Cys-24–Cys-36. A Cysteine amide modification is found at Cys-36.

It belongs to the conotoxin A superfamily. Unmodified Met-32 is essential for toxin binding to rat alpha-3-beta-4/CHRNA3-CHRNB4 nAChR. An oxidation of this methionine provokes a 13.3-fold decrease in inhibitory potency (IC(50)=245 nM instead of 18 nM). Owing to its potent activity, derivatives of this toxin have a potential in the development of a novel drug. Unfortunately, the oxidation of the methionine is readily to happen during toxin synthesis and oxidation steps as well as under oxidative environment in vivo, which should still be considered to find a solution to this major drawback. In terms of tissue distribution, expressed by the venom duct.

The protein resides in the secreted. In terms of biological role, alpha-conotoxins act on postsynaptic membranes, they bind to the nicotinic acetylcholine receptors (nAChR) and thus inhibit them. This toxin inhibits alpha-3-beta-4/CHRNA3-CHRNB4 (IC(50)=3.6-18.38 nM), alpha-6/alpha-3-beta-4 (CHRNA6/CHRNA3-CHRNB4) (IC(50)=33.9-94.1 nM), and alpha-2-beta-4/CHRNA2-CHRNB4 (IC(50)=4550 nM) nAChRs. The toxin competes with agonists in the orthosteric binding site of alpha-3-beta-4/CHRNA3-CHRNB4 and alpha-6-beta-4/CHRNA6-CHRNB4. In Conus textile (Cloth-of-gold cone), this protein is Alpha-conotoxin TxID.